The chain runs to 636 residues: DNA mismatch repair protein MutL (636 aa).

Residues 341 to 420 (APLINKPEQQ…PGAEEYTPEA (80 aa)) are disordered. The segment covering 348 to 358 (EQQKLDFDQVR) has biased composition (basic and acidic residues).

The protein belongs to the DNA mismatch repair MutL/HexB family.

In terms of biological role, this protein is involved in the repair of mismatches in DNA. It is required for dam-dependent methyl-directed DNA mismatch repair. May act as a 'molecular matchmaker', a protein that promotes the formation of a stable complex between two or more DNA-binding proteins in an ATP-dependent manner without itself being part of a final effector complex. The protein is DNA mismatch repair protein MutL of Bacillus licheniformis (strain ATCC 14580 / DSM 13 / JCM 2505 / CCUG 7422 / NBRC 12200 / NCIMB 9375 / NCTC 10341 / NRRL NRS-1264 / Gibson 46).